The chain runs to 267 residues: tRNA pseudouridine synthase A (267 aa).

D55 (nucleophile) is an active-site residue. Y111 is a substrate binding site.

It belongs to the tRNA pseudouridine synthase TruA family.

It carries out the reaction uridine(38/39/40) in tRNA = pseudouridine(38/39/40) in tRNA. Formation of pseudouridine at positions 38, 39 and 40 in the anticodon stem and loop of transfer RNAs. This chain is tRNA pseudouridine synthase A, found in Thermococcus onnurineus (strain NA1).